The primary structure comprises 541 residues: MSASAPSRPAVVTAPAVPRQDEVLTEAALVFLAELHRRFTPRRDELLARRARRRAEISRTGTLDFLPETAHVRADDSWRVAPAPPALQDRRVEITGPADRRMTVNALNSGARVWLADFEDSSAPTWENVISGQLALSDAYHRRIDFTDERSGKSYALRPDAELATVVMRPRGWHLPERHLTGPDGGVLPGALVDFGLCFFHTARRLLDLGKGPYFYLPKLESHQEARLWNDIFLFAQEQLGIPRGTIRATVLIETITAAYEMEEILYELREHASGLNAGRWDYLFSIIKNFRDAGPGFVLPDRNAITMTAPFMRAYTELLVRTCHRRGAHAIGGMAAFIPSRRDPEINRAAFEKVRADKDREAADGFDGSWVAHPDLVPVALASFDAVLGDRPHQKDRLREEVSVTAAELIAVGSPAARPTAAGLLNAVRVGIRYIEAWLRGTGAVAIFHLMEDAATAEISRSQIWQWINAGVVLENGERVTPALVRTLAAGELGALRETLGGEEYAAGRWQEAHDLLLRVALDEEYADFLTLPAYERLTG.

Catalysis depends on Arg169, which acts as the Proton acceptor. Asp454 serves as the catalytic Proton donor.

Belongs to the malate synthase family.

The protein localises to the cytoplasm. The enzyme catalyses glyoxylate + acetyl-CoA + H2O = (S)-malate + CoA + H(+). Its pathway is carbohydrate metabolism; glyoxylate cycle; (S)-malate from isocitrate: step 2/2. The sequence is that of Malate synthase (aceB) from Streptomyces clavuligerus.